A 259-amino-acid chain; its full sequence is Caffeoyl-CoA O-methyltransferase 1 (259 aa).

The segment covering Met-1–Thr-14 has biased composition (low complexity). The interval Met-1–Glu-29 is disordered. At Ala-2 the chain carries N-acetylalanine. Residue Lys-33 coordinates substrate. Residues Thr-75, Glu-97, Gly-99–Val-100, Ser-105, Asp-123, and Ala-152 each bind S-adenosyl-L-methionine. Position 175 (Asp-175) interacts with substrate. Asp-175 lines the a divalent metal cation pocket. Residue Asp-177 participates in S-adenosyl-L-methionine binding. 2 residues coordinate a divalent metal cation: Asp-201 and Asn-202. Substrate is bound at residue Asn-206.

It belongs to the class I-like SAM-binding methyltransferase superfamily. Cation-dependent O-methyltransferase family. CCoAMT subfamily. The cofactor is a divalent metal cation. In terms of tissue distribution, expressed in stems and roots. Detected in leaves, siliques, flower buds, flowers. Expressed in the tapetum, but not in the endothecium. Detected in the vascular system of leaves and all flower organs, including stigma, stamens, petals and sepals.

The catalysed reaction is (E)-caffeoyl-CoA + S-adenosyl-L-methionine = (E)-feruloyl-CoA + S-adenosyl-L-homocysteine + H(+). It participates in aromatic compound metabolism; phenylpropanoid biosynthesis. In terms of biological role, methylates caffeoyl-CoA to feruloyl-CoA. Has a very low activity with caffeic acid and esculetin. Involved in scopoletin biosynthesis in roots. This Arabidopsis thaliana (Mouse-ear cress) protein is Caffeoyl-CoA O-methyltransferase 1 (CCOAOMT1).